The primary structure comprises 156 residues: 6,7-dimethyl-8-ribityllumazine synthase (156 aa).

5-amino-6-(D-ribitylamino)uracil is bound by residues F23, 57–59 (AFE), and 81–83 (AVI). A (2S)-2-hydroxy-3-oxobutyl phosphate-binding site is contributed by 86–87 (AT). Catalysis depends on H89, which acts as the Proton donor. F114 is a 5-amino-6-(D-ribitylamino)uracil binding site. Residue R128 coordinates (2S)-2-hydroxy-3-oxobutyl phosphate.

Belongs to the DMRL synthase family.

It catalyses the reaction (2S)-2-hydroxy-3-oxobutyl phosphate + 5-amino-6-(D-ribitylamino)uracil = 6,7-dimethyl-8-(1-D-ribityl)lumazine + phosphate + 2 H2O + H(+). It functions in the pathway cofactor biosynthesis; riboflavin biosynthesis; riboflavin from 2-hydroxy-3-oxobutyl phosphate and 5-amino-6-(D-ribitylamino)uracil: step 1/2. Catalyzes the formation of 6,7-dimethyl-8-ribityllumazine by condensation of 5-amino-6-(D-ribitylamino)uracil with 3,4-dihydroxy-2-butanone 4-phosphate. This is the penultimate step in the biosynthesis of riboflavin. This chain is 6,7-dimethyl-8-ribityllumazine synthase, found in Sulfurovum sp. (strain NBC37-1).